The chain runs to 169 residues: Sorting nexin-24 (169 aa).

Met1 carries the N-acetylmethionine modification. Residues 1–125 (MEVYIPSFRY…SFDETESEES (125 aa)) form the PX domain. 4 residues coordinate a 1,2-diacyl-sn-glycero-3-phospho-(1D-myo-inositol-3-phosphate): Arg38, Ser40, Lys61, and Arg74. A phosphoserine mark is found at Ser113 and Ser116.

This sequence belongs to the sorting nexin family.

The protein localises to the cytoplasmic vesicle membrane. Functionally, may be involved in several stages of intracellular trafficking. This chain is Sorting nexin-24 (SNX24), found in Bos taurus (Bovine).